The chain runs to 527 residues: Pyruvate kinase 1, cytosolic (527 aa).

Arg58 serves as a coordination point for substrate. K(+) is bound by residues Asp60, Ser62, Asp92, and Thr93. Residue 60 to 63 (DFSW) participates in ATP binding. Residue Lys256 coordinates substrate. Residue Glu258 coordinates Mg(2+). Substrate is bound by residues Gly281, Asn282, and Thr313. Asn282 serves as a coordination point for Mg(2+).

It belongs to the pyruvate kinase family. As to quaternary structure, homotetramer. The cofactor is Mg(2+). K(+) is required as a cofactor.

Its subcellular location is the cytoplasm. It is found in the cytosol. The enzyme catalyses pyruvate + ATP = phosphoenolpyruvate + ADP + H(+). The protein operates within carbohydrate degradation; glycolysis; pyruvate from D-glyceraldehyde 3-phosphate: step 5/5. Key regulatory enzyme of the glycolytic pathway that catalyzes the final step of glycolysis, converting ADP and phosphoenolpyruvate (PEP) to ATP and pyruvate by essentially irreversible transphosphorylation. Is critical for plant growth and development. This chain is Pyruvate kinase 1, cytosolic, found in Oryza sativa subsp. indica (Rice).